A 651-amino-acid chain; its full sequence is Apical membrane antigen 1-like protein (651 aa).

The first 41 residues, Met1–Ala41, serve as a signal peptide directing secretion. The propeptide at Thr42–Pro81 is removed in mature form. The Extracellular segment spans residues Thr42–Thr570. Disulfide bonds link Cys141/Cys309, Cys215/Cys248, Cys264/Cys277, Cys327/Cys417, Cys347/Cys408, Cys441/Cys463, and Cys453/Cys475. N-linked (GlcNAc...) asparagine glycosylation occurs at Asn230. Residues Pro483 to Lys486 form a 1; approximate repeat. The interval Pro483 to Glu531 is 12 x 4 AA approximate tandem-repeats of P-P-V-E. Residues Pro483–Pro547 show a composition bias toward pro residues. Positions Pro483–Gly567 are disordered. Repeat copies occupy residues Pro487–Glu490, Pro491–Glu494, Pro495–Glu498, Pro499–Glu502, Pro503–Glu506, Pro507–Glu510, Pro511–Glu514, Pro515–Glu518, and Pro519–Glu522. Residues Pro523 to Glu527 form an 11; approximate repeat. The stretch at Pro528–Glu531 is one 12; approximate repeat. The chain crosses the membrane as a helical span at residues Ala571–Val591. The Cytoplasmic segment spans residues Gly592–Phe651. A disordered region spans residues Arg598 to Phe651.

Belongs to the apicomplexan parasites AMA1 family. In terms of processing, proteolytically cleaved within its transmembrane domain, releasing a soluble form from the cell surface.

The protein localises to the cell membrane. Its subcellular location is the secreted. May play a role in host cell invasion. The protein is Apical membrane antigen 1-like protein of Toxoplasma gondii (strain ATCC 50861 / VEG).